Here is a 103-residue protein sequence, read N- to C-terminus: Signal recognition particle 19 kDa protein (103 aa).

Belongs to the SRP19 family. In terms of assembly, part of the signal recognition particle protein translocation system, which is composed of SRP and FtsY. Archaeal SRP consists of a 7S RNA molecule of 300 nucleotides and two protein subunits: SRP54 and SRP19.

It localises to the cytoplasm. Involved in targeting and insertion of nascent membrane proteins into the cytoplasmic membrane. Binds directly to 7S RNA and mediates binding of the 54 kDa subunit of the SRP. The chain is Signal recognition particle 19 kDa protein from Methanopyrus kandleri (strain AV19 / DSM 6324 / JCM 9639 / NBRC 100938).